We begin with the raw amino-acid sequence, 149 residues long: Transcriptional regulator MraZ (149 aa).

SpoVT-AbrB domains are found at residues 7-54 and 83-126; these read KYVN…GISH and AVQL…QPQN.

It belongs to the MraZ family. In terms of assembly, forms oligomers.

The protein localises to the cytoplasm. The protein resides in the nucleoid. The sequence is that of Transcriptional regulator MraZ from Rickettsia felis (strain ATCC VR-1525 / URRWXCal2) (Rickettsia azadi).